The sequence spans 218 residues: Uracil-DNA glycosylase (218 aa).

The protein belongs to the uracil-DNA glycosylase (UDG) superfamily. UNG family. In terms of assembly, homodimer. Interacts with protein OPG148. Component of the Uracil-DNA glycosylase(UDG)-OPG148-polymerase complex; OPG148 and UDG form a heterodimeric processivity factor that associates with OPG71 to form the processive polymerase holoenzyme.

The enzyme catalyses Hydrolyzes single-stranded DNA or mismatched double-stranded DNA and polynucleotides, releasing free uracil.. Its function is as follows. Plays an essential role in viral replication as a component of the DNA polymerase processivity factor. Excises uracil residues from the DNA which can arise as a result of misincorporation of dUMP residues by DNA polymerase or due to deamination of cytosine. This chain is Uracil-DNA glycosylase (OPG116), found in Monkeypox virus.